An 890-amino-acid chain; its full sequence is Alanine--tRNA ligase (890 aa).

Positions 572, 576, 674, and 678 each coordinate Zn(2+).

It belongs to the class-II aminoacyl-tRNA synthetase family. Zn(2+) is required as a cofactor.

It localises to the cytoplasm. It carries out the reaction tRNA(Ala) + L-alanine + ATP = L-alanyl-tRNA(Ala) + AMP + diphosphate. In terms of biological role, catalyzes the attachment of alanine to tRNA(Ala) in a two-step reaction: alanine is first activated by ATP to form Ala-AMP and then transferred to the acceptor end of tRNA(Ala). Also edits incorrectly charged Ser-tRNA(Ala) and Gly-tRNA(Ala) via its editing domain. This chain is Alanine--tRNA ligase, found in Prochlorococcus marinus (strain MIT 9211).